The following is a 444-amino-acid chain: Aspartate--tRNA(Asp/Asn) ligase (444 aa).

Glutamate 176 is an L-aspartate binding site. The tract at residues 198–201 is aspartate; that stretch reads QLFK. Arginine 220 lines the L-aspartate pocket. ATP contacts are provided by residues 220–222, 228–230, and glutamate 367; these read RAE and RHL. Mg(2+)-binding residues include glutamate 367 and serine 370. L-aspartate is bound by residues serine 370 and arginine 374. 415–418 is a binding site for ATP; sequence GCER.

The protein belongs to the class-II aminoacyl-tRNA synthetase family. Type 2 subfamily. As to quaternary structure, homodimer. It depends on Mg(2+) as a cofactor.

It is found in the cytoplasm. It catalyses the reaction tRNA(Asx) + L-aspartate + ATP = L-aspartyl-tRNA(Asx) + AMP + diphosphate. Functionally, aspartyl-tRNA synthetase with relaxed tRNA specificity since it is able to aspartylate not only its cognate tRNA(Asp) but also tRNA(Asn). Reaction proceeds in two steps: L-aspartate is first activated by ATP to form Asp-AMP and then transferred to the acceptor end of tRNA(Asp/Asn). This is Aspartate--tRNA(Asp/Asn) ligase from Methanosarcina acetivorans (strain ATCC 35395 / DSM 2834 / JCM 12185 / C2A).